The chain runs to 601 residues: Elongation factor 4 (601 aa).

The tr-type G domain maps to 7-189 (DTIRNFSIVA…AIVAKLPPPK (183 aa)). Residues 19–24 (DHGKST) and 136–139 (NKID) each bind GTP.

This sequence belongs to the TRAFAC class translation factor GTPase superfamily. Classic translation factor GTPase family. LepA subfamily.

The protein resides in the cell inner membrane. The catalysed reaction is GTP + H2O = GDP + phosphate + H(+). Its function is as follows. Required for accurate and efficient protein synthesis under certain stress conditions. May act as a fidelity factor of the translation reaction, by catalyzing a one-codon backward translocation of tRNAs on improperly translocated ribosomes. Back-translocation proceeds from a post-translocation (POST) complex to a pre-translocation (PRE) complex, thus giving elongation factor G a second chance to translocate the tRNAs correctly. Binds to ribosomes in a GTP-dependent manner. This is Elongation factor 4 from Methylobacterium nodulans (strain LMG 21967 / CNCM I-2342 / ORS 2060).